Reading from the N-terminus, the 75-residue chain is Sec-independent protein translocase protein TatA (75 aa).

The helical transmembrane segment at 1 to 21 (MGISIWQLLIVLGIVILLFGT) threads the bilayer. Residues 41–75 (SMSDEEEKNAEQQPLEKQNAEQQAQAEDKPKEKQG) are disordered. Residues 56-65 (EKQNAEQQAQ) show a composition bias toward low complexity. Basic and acidic residues predominate over residues 66-75 (AEDKPKEKQG).

The protein belongs to the TatA/E family. In terms of assembly, the Tat system comprises two distinct complexes: a TatABC complex, containing multiple copies of TatA, TatB and TatC subunits, and a separate TatA complex, containing only TatA subunits. Substrates initially bind to the TatABC complex, which probably triggers association of the separate TatA complex to form the active translocon.

It is found in the cell inner membrane. Its function is as follows. Part of the twin-arginine translocation (Tat) system that transports large folded proteins containing a characteristic twin-arginine motif in their signal peptide across membranes. TatA could form the protein-conducting channel of the Tat system. The sequence is that of Sec-independent protein translocase protein TatA from Marinobacter nauticus (strain ATCC 700491 / DSM 11845 / VT8) (Marinobacter aquaeolei).